Reading from the N-terminus, the 194-residue chain is Peptidyl-tRNA hydrolase (194 aa).

Position 17 (Tyr17) interacts with tRNA. His22 serves as the catalytic Proton acceptor. TRNA is bound by residues Tyr68, Asn70, and Asn116.

Belongs to the PTH family. In terms of assembly, monomer.

Its subcellular location is the cytoplasm. It catalyses the reaction an N-acyl-L-alpha-aminoacyl-tRNA + H2O = an N-acyl-L-amino acid + a tRNA + H(+). Functionally, hydrolyzes ribosome-free peptidyl-tRNAs (with 1 or more amino acids incorporated), which drop off the ribosome during protein synthesis, or as a result of ribosome stalling. Catalyzes the release of premature peptidyl moieties from peptidyl-tRNA molecules trapped in stalled 50S ribosomal subunits, and thus maintains levels of free tRNAs and 50S ribosomes. This is Peptidyl-tRNA hydrolase from Pseudomonas syringae pv. tomato (strain ATCC BAA-871 / DC3000).